The primary structure comprises 88 residues: Putative transmembrane protein ORF24 (88 aa).

A run of 3 helical transmembrane segments spans residues 16 to 36 (LNMG…WAGM), 42 to 62 (AVFV…VTQF), and 64 to 84 (FIWF…VASI).

It localises to the host membrane. The protein is Putative transmembrane protein ORF24 of Haloarcula hispanica (His1V).